Reading from the N-terminus, the 442-residue chain is tRNA-2-methylthio-N(6)-dimethylallyladenosine synthase (442 aa).

The MTTase N-terminal domain maps to 2-120 (KKVFIRTFGC…LPKMIVDKET (119 aa)). Residues C11, C49, C83, C157, C161, and C164 each coordinate [4Fe-4S] cluster. The region spanning 143 to 375 (RVEGGAAFVS…NEVIEAETAR (233 aa)) is the Radical SAM core domain. Positions 378-441 (QTMIGTVQRC…TFSLRGKIVE (64 aa)) constitute a TRAM domain.

It belongs to the methylthiotransferase family. MiaB subfamily. Monomer. It depends on [4Fe-4S] cluster as a cofactor.

Its subcellular location is the cytoplasm. The enzyme catalyses N(6)-dimethylallyladenosine(37) in tRNA + (sulfur carrier)-SH + AH2 + 2 S-adenosyl-L-methionine = 2-methylsulfanyl-N(6)-dimethylallyladenosine(37) in tRNA + (sulfur carrier)-H + 5'-deoxyadenosine + L-methionine + A + S-adenosyl-L-homocysteine + 2 H(+). Its function is as follows. Catalyzes the methylthiolation of N6-(dimethylallyl)adenosine (i(6)A), leading to the formation of 2-methylthio-N6-(dimethylallyl)adenosine (ms(2)i(6)A) at position 37 in tRNAs that read codons beginning with uridine. The protein is tRNA-2-methylthio-N(6)-dimethylallyladenosine synthase of Neisseria gonorrhoeae (strain NCCP11945).